We begin with the raw amino-acid sequence, 422 residues long: Phagosome assembly factor 1 (422 aa).

It belongs to the PHAF1 family. Interacts with BCAS3; the interaction is requrired for the association with the phagophore.

It is found in the cytoplasm. The protein localises to the preautophagosomal structure. Plays a regulatory role in autophagic activity. In complex with BCAS3, associates with the autophagosome formation site during both non-selective and selective autophagy. This is Phagosome assembly factor 1 (Phaf1) from Rattus norvegicus (Rat).